We begin with the raw amino-acid sequence, 434 residues long: Indole diterpene prenyltransferase nodD2 (434 aa).

Residues 85–86 (LI) and glutamate 94 contribute to the L-tryptophan site. Arginine 107, lysine 194, arginine 268, lysine 270, tyrosine 272, glutamine 351, tyrosine 353, tyrosine 418, and tyrosine 422 together coordinate substrate.

This sequence belongs to the tryptophan dimethylallyltransferase family.

It participates in secondary metabolite biosynthesis. Functionally, indole diterpene prenyltransferase; part of the gene cluster that mediates the biosynthesis of the indole diterpenes nodulisporic acids (NA). Nodulisporic acid A (NAA) and its chemically modified derivatives are of particular significance because of their highly potent insecticidal activity against blood-feeding arthropods and lack of observable adverse effects on mammals, in particular the tremogenicity associated with the paspaline-derived IDTs is not observed. The geranylgeranyl diphosphate (GGPP) synthase ggs1, localized outside of the cluster, is proposed to catalyze the first step in nodulisporic acid biosynthesis via conversion of farnesyl pyrophosphate and isopentyl pyrophosphate into geranylgeranyl pyrophosphate (GGPP). Condensation of indole-3-glycerol phosphate with GGPP by the prenyl transferase nodC then forms 3-geranylgeranylindole (3-GGI). Epoxidation by the FAD-dependent monooxygenase nodM leads to a single-epoxidized-GGI that is substrate of the terpene cyclase nodB for cyclization to yield emindole SB. The terminal methyl carbon, C28, of emindole SB is then oxidized by the cytochrome P450 monooxygenase nodW to produce nodulisporic acid F (NAF), the pentacyclic core of NAA. NAF is converted to nodulisporic acid E (NAE) via prenylation. This step is probably performed by one of the indole diterpene prenyltransferases nodD1 or nodD2. Several oxidation steps performed by the FAD-linked oxidoreductase nodO and one of the cytochrome P450 monooxygenase nodR, nodX or nodZ further convert NAE to nodulisporic acid D (NAD). NAD is substrate of cytochrome P450 monooxygenase nodJ to produce the precursor of nodulisporic acid C (NAC), converted to NAC by one of the indole diterpene prenyltransferases nodD1 or nodD2. The FAD-dependent monooxygenase nodY2 then oxidizes NAC to nodulisporic acid B (NAB). Finally NAB is converted to NAA by one of the cytochrome P450 monooxygenases nodR, nodX or nodZ. The chain is Indole diterpene prenyltransferase nodD2 from Hypoxylon pulicicidum.